Here is a 378-residue protein sequence, read N- to C-terminus: Glutamate 5-kinase 1 (378 aa).

ATP is bound at residue Lys-13. Substrate-binding residues include Ser-53, Asp-140, and Asn-152. Position 172–173 (172–173 (SD)) interacts with ATP. Residues 278-355 (AGRLTVDAGA…AEIETVLGYE (78 aa)) enclose the PUA domain.

Belongs to the glutamate 5-kinase family.

It localises to the cytoplasm. It carries out the reaction L-glutamate + ATP = L-glutamyl 5-phosphate + ADP. Its pathway is amino-acid biosynthesis; L-proline biosynthesis; L-glutamate 5-semialdehyde from L-glutamate: step 1/2. In terms of biological role, catalyzes the transfer of a phosphate group to glutamate to form L-glutamate 5-phosphate. The polypeptide is Glutamate 5-kinase 1 (Mesorhizobium japonicum (strain LMG 29417 / CECT 9101 / MAFF 303099) (Mesorhizobium loti (strain MAFF 303099))).